Reading from the N-terminus, the 267-residue chain is Cerberus (267 aa).

Residues 1-17 (MHLLLFQLLVLLPLGKT) form the signal peptide. Disordered regions lie at residues 19-52 (RHQD…EAEE) and 87-113 (WKKP…QSLI). The N-linked (GlcNAc...) asparagine glycan is linked to Asn-26. The segment covering 88–101 (KKPEREMHPSRDSD) has biased composition (basic and acidic residues). 4 cysteine pairs are disulfide-bonded: Cys-162-Cys-209, Cys-176-Cys-223, Cys-186-Cys-239, and Cys-190-Cys-241. A CTCK domain is found at 162–246 (CRTVPFSQTI…EECQCKVKTE (85 aa)). The N-linked (GlcNAc...) asparagine glycan is linked to Asn-222.

It belongs to the DAN family. Forms monomers and predominantly dimers. In terms of processing, N-glycosylated.

The protein resides in the secreted. Its function is as follows. Cytokine that may play a role in anterior neural induction and somite formation during embryogenesis in part through a BMP-inhibitory mechanism. Can regulate Nodal signaling during gastrulation as well as the formation and patterning of the primitive streak. In Homo sapiens (Human), this protein is Cerberus (CER1).